Consider the following 526-residue polypeptide: Glutamyl-tRNA(Gln) amidotransferase subunit A, mitochondrial (526 aa).

Lys76 (charge relay system) is an active-site residue. The disordered stretch occupies residues 147–166 (QYREKRKQNSHSENEDSNWL). Catalysis depends on Ser171, which acts as the Charge relay system. Ser195 acts as the Acyl-ester intermediate in catalysis.

The protein belongs to the amidase family. GatA subfamily. Subunit of the heterotrimeric GatCAB amidotransferase (AdT) complex, composed of A (QRSL1), B (GATB) and C (GATC) subunits.

It is found in the mitochondrion. It catalyses the reaction L-glutamyl-tRNA(Gln) + L-glutamine + ATP + H2O = L-glutaminyl-tRNA(Gln) + L-glutamate + ADP + phosphate + H(+). Allows the formation of correctly charged Gln-tRNA(Gln) through the transamidation of misacylated Glu-tRNA(Gln) in the mitochondria. The reaction takes place in the presence of glutamine and ATP through an activated gamma-phospho-Glu-tRNA(Gln). The sequence is that of Glutamyl-tRNA(Gln) amidotransferase subunit A, mitochondrial from Bos taurus (Bovine).